Reading from the N-terminus, the 859-residue chain is MFGELRDLLTGGGNETTTKKVKGTVVLMKKNVLDFNDFNASFLDRLHEFLGNKITLRLVSSDVTDSENGSKGKLGKAAHLEDWITTITSLTAGESAFKVTFDYETDFGYPGAFLIRNSHFSEFLLKSLTLEDVPGHGRVHYICNSWIYPAKHYTTDRVFFSNKTYLPHETPATLLKYREEELVSLRGTGEGELKEWDRVYDYAYYNDLGVPPKNPRPVLGGTQEYPYPRRGRTGRKPTKEDPQTESRLPITSSLDIYVPRDERFGHLKMSDFLAYALKAIAQFIQPALEAVFDDTPKEFDSFEDVLKIYEEGIDLPNQALIDSIVKNIPLEMLKEIFRTDGQKFLKFPVPQVIKEDKTAWRTDEEFAREMLAGLNPVVIQLLKEFPPKSKLDSESYGNQNSTITKSHIEHNLDGLTVEEALEKERLFILDHHDTLMPYLGRVNTTTTKTYASRTLLFLKDDGTLKPLVIELSLPHPNGDKFGAVSEVYTPGEGVYDSLWQLAKAFVGVNDSGNHQLISHWMQTHASIEPFVIATNRQLSVLHPVFKLLEPHFRDTMNINALARQILINGGGIFEITVFPSKYAMEMSSFIYKNHWTFPDQALPAELKKRGMAVEDPEAPHGLRLRIKDYPYAVDGLEVWYAIESWVRDYIFLFYKIEEDIQTDTELQAWWKEVREEGHGDKKSEPWWPKMQTREELVESCTIIIWVASALHAAVNFGQYPVAGYLPNRPTISRQYMPKENTPEFEELEKNPDKVFLKTITAQLQTLLGISLIEILSTHSSDEVYLGQRDSKEWAAEKEALEAFEKFGEKVKEIEKNIDERNDDETLKNRTGLVKMPYTLLFPSSEGGVTGRGIPNSVSI.

The PLAT domain maps to 21–161 (VKGTVVLMKK…HYTTDRVFFS (141 aa)). The 696-residue stretch at 164–859 (TYLPHETPAT…GRGIPNSVSI (696 aa)) folds into the Lipoxygenase domain. The tract at residues 213–246 (KNPRPVLGGTQEYPYPRRGRTGRKPTKEDPQTES) is disordered. Positions 519, 524, 711, 715, and 859 each coordinate Fe cation.

Belongs to the lipoxygenase family. In terms of assembly, monomer. Fe cation serves as cofactor. As to expression, seedlings, roots, leaves, and flowers (at protein level). Expressed in guard cells.

The protein localises to the cytoplasm. It carries out the reaction (9Z,12Z)-octadecadienoate + O2 = (9S)-hydroperoxy-(10E,12Z)-octadecadienoate. The catalysed reaction is (9Z,12Z,15Z)-octadecatrienoate + O2 = (9S)-hydroperoxy-(10E,12Z,15Z)-octadecatrienoate. It functions in the pathway lipid metabolism; oxylipin biosynthesis. Its function is as follows. 9S-lipoxygenase that can use linoleic acid or linolenic acid as substrates. Plant lipoxygenases may be involved in a number of diverse aspects of plant physiology including growth and development, pest resistance, and senescence or responses to wounding. Catalyzes the hydroperoxidation of lipids containing a cis,cis-1,4-pentadiene structure. Function as regulators of root development by controlling the emergence of lateral roots. 9S-lypoxygenase-derived oxylipins may play an antagonistic role to ethylene signaling in the control of responses involving oxidative stress, lipid peroxidation and plant defense. LOX1-derived oxylipins may be involved in stress signaling from roots to shoots in response to cadmium exposure. 9S-lypoxygenase-derived oxylipins are engaged during infection to control the balance between salicylic acid (SA) and jasmonate (JA) signaling to facilitate infection by the fungal pathogen Fusarium graminearum. 9S-lypoxygenase-derived oxylipins activate brassinosteroid signaling to promote cell wall-based defense and limit pathogen infection. The LOX1-derived compound (9S)-hydroperoxy-(10E,12Z,15Z)-octadecatrienoate protects plant tissues against infection by the bacterial pathogen Pseudomonas syringae pv tomato DC3000. The LOX1-derived oxylipins are required to trigger stomatal closure in response to both infection by the bacterial pathogen Pseudomonas syringae pv tomato DC3000, and the pathogen-associated molecular pattern (PAMP) flagellin peptide flg22. Contributes to the oxidation of free fatty acids during seed aging. This is Linoleate 9S-lipoxygenase 1 from Arabidopsis thaliana (Mouse-ear cress).